A 113-amino-acid chain; its full sequence is Prefoldin subunit beta (113 aa).

The protein belongs to the prefoldin subunit beta family. As to quaternary structure, heterohexamer of two alpha and four beta subunits.

It localises to the cytoplasm. Its function is as follows. Molecular chaperone capable of stabilizing a range of proteins. Seems to fulfill an ATP-independent, HSP70-like function in archaeal de novo protein folding. This is Prefoldin subunit beta (pfdB) from Methanocaldococcus jannaschii (strain ATCC 43067 / DSM 2661 / JAL-1 / JCM 10045 / NBRC 100440) (Methanococcus jannaschii).